A 140-amino-acid polypeptide reads, in one-letter code: MMDIKQIQEALPHRYPMLLVDRILEASDDEIVAIKNVTINEPFFNGHFPQYPVMPGVLIMEALAQTAGVLELSKEENKGKLVFYAGMDKVKFKKQVVPGDQLVMTARFIKRRGTIAVVEAKAEVDGKLAASGTLTFAFGQ.

Residue His-47 is part of the active site.

This sequence belongs to the thioester dehydratase family. FabZ subfamily.

The protein localises to the cytoplasm. The enzyme catalyses a (3R)-hydroxyacyl-[ACP] = a (2E)-enoyl-[ACP] + H2O. Its function is as follows. Involved in unsaturated fatty acids biosynthesis. Catalyzes the dehydration of short chain beta-hydroxyacyl-ACPs and long chain saturated and unsaturated beta-hydroxyacyl-ACPs. The polypeptide is 3-hydroxyacyl-[acyl-carrier-protein] dehydratase FabZ (Streptococcus equi subsp. equi (strain 4047)).